The chain runs to 216 residues: Glycerol-3-phosphate acyltransferase (216 aa).

6 helical membrane-spanning segments follow: residues 3–23, 48–68, 82–102, 112–132, 142–162, and 166–186; these read FPIF…YWIA, IGWK…MLPV, FQLL…FLGF, FGVF…VFWV, LGSI…TILL, and EVSY…ILTH.

The protein belongs to the PlsY family. As to quaternary structure, probably interacts with PlsX.

The protein resides in the cell inner membrane. It catalyses the reaction an acyl phosphate + sn-glycerol 3-phosphate = a 1-acyl-sn-glycero-3-phosphate + phosphate. Its pathway is lipid metabolism; phospholipid metabolism. Its function is as follows. Catalyzes the transfer of an acyl group from acyl-phosphate (acyl-PO(4)) to glycerol-3-phosphate (G3P) to form lysophosphatidic acid (LPA). This enzyme utilizes acyl-phosphate as fatty acyl donor, but not acyl-CoA or acyl-ACP. The chain is Glycerol-3-phosphate acyltransferase from Leptospira interrogans serogroup Icterohaemorrhagiae serovar Lai (strain 56601).